Consider the following 476-residue polypeptide: GTPase Der (476 aa).

2 EngA-type G domains span residues 3–167 (FTVA…GEDM) and 205–380 (LRVA…KTWN). GTP is bound by residues 9–16 (GRPNVGKS), 56–60 (DTAGL), 119–122 (NKSE), 211–218 (GRPNAGKS), 258–262 (DTAGM), and 323–326 (NKWD). A KH-like domain is found at 381–465 (RRISTAKLNR…PIRVHYRGSD (85 aa)).

Belongs to the TRAFAC class TrmE-Era-EngA-EngB-Septin-like GTPase superfamily. EngA (Der) GTPase family. As to quaternary structure, associates with the 50S ribosomal subunit.

In terms of biological role, GTPase that plays an essential role in the late steps of ribosome biogenesis. This is GTPase Der from Agrobacterium fabrum (strain C58 / ATCC 33970) (Agrobacterium tumefaciens (strain C58)).